A 184-amino-acid chain; its full sequence is Protein C8 (184 aa).

A signal peptide spans 1-21 (MSSIRFIACLYLISIFGNCHE).

The protein belongs to the poxviridae C8 protein family.

This Vaccinia virus (strain Copenhagen) (VACV) protein is Protein C8.